Here is a 302-residue protein sequence, read N- to C-terminus: 1D-myo-inositol 2-acetamido-2-deoxy-alpha-D-glucopyranoside deacetylase (302 aa).

Residues histidine 13, aspartate 16, and histidine 155 each contribute to the Zn(2+) site.

This sequence belongs to the MshB deacetylase family. Requires Zn(2+) as cofactor.

It catalyses the reaction 1D-myo-inositol 2-acetamido-2-deoxy-alpha-D-glucopyranoside + H2O = 1D-myo-inositol 2-amino-2-deoxy-alpha-D-glucopyranoside + acetate. Catalyzes the deacetylation of 1D-myo-inositol 2-acetamido-2-deoxy-alpha-D-glucopyranoside (GlcNAc-Ins) in the mycothiol biosynthesis pathway. In Nocardioides sp. (strain ATCC BAA-499 / JS614), this protein is 1D-myo-inositol 2-acetamido-2-deoxy-alpha-D-glucopyranoside deacetylase.